The chain runs to 309 residues: MEFKHISVLLEETIDSLNIKEDGVYVDCTLGGGGHSKEILKKLSHKGKLIGIDQDTSAIKAAKERLKDYENVIYVHNNFYNIDSILEELDIDKVDGIIMDLGVSSYQLDEASRGFSYMKDAPLDMRMNREENLSAYGVINNYKEEELFKILKNYGEEKFSRKIARFIVEKRTENPIETTGELVEIIRKAIPAKFQREGHPAKRTFQAIRIEVNKELQILNKAIEDSVNRLNKDGRLSIITFHSLEDRIVKVKFKELEKPCTCPPSFPICVCGKEPQIKIITKKPIEPSKEEKEINSRSRSAKLRVCRKI.

S-adenosyl-L-methionine is bound by residues 33–35 (GGH), Asp-53, Phe-79, Asp-100, and Gln-107.

It belongs to the methyltransferase superfamily. RsmH family.

Its subcellular location is the cytoplasm. The enzyme catalyses cytidine(1402) in 16S rRNA + S-adenosyl-L-methionine = N(4)-methylcytidine(1402) in 16S rRNA + S-adenosyl-L-homocysteine + H(+). Specifically methylates the N4 position of cytidine in position 1402 (C1402) of 16S rRNA. This Clostridium botulinum (strain 657 / Type Ba4) protein is Ribosomal RNA small subunit methyltransferase H.